Reading from the N-terminus, the 163-residue chain is Transcriptional repressor NrdR (163 aa).

A zinc finger spans residues 3–34; that stretch reads CPFCAHPEDKVVDSRESKEGESIRRRRECLKC. The region spanning 49–139 is the ATP-cone domain; it reads YMVVKKDGRR…VYLDFKDVRE (91 aa).

It belongs to the NrdR family. Requires Zn(2+) as cofactor.

Negatively regulates transcription of bacterial ribonucleotide reductase nrd genes and operons by binding to NrdR-boxes. The polypeptide is Transcriptional repressor NrdR (Koribacter versatilis (strain Ellin345)).